The sequence spans 225 residues: Lipoprotein-releasing system ATP-binding protein LolD (225 aa).

Residues 5–225 form the ABC transporter domain; it reads LEVMDLTKGY…RLVDGRVVAD (221 aa). Position 41-48 (41-48) interacts with ATP; it reads GASGTGKS.

This sequence belongs to the ABC transporter superfamily. Lipoprotein translocase (TC 3.A.1.125) family. The complex is composed of two ATP-binding proteins (LolD) and two transmembrane proteins (LolC and LolE).

It localises to the cell inner membrane. Part of the ABC transporter complex LolCDE involved in the translocation of mature outer membrane-directed lipoproteins, from the inner membrane to the periplasmic chaperone, LolA. Responsible for the formation of the LolA-lipoprotein complex in an ATP-dependent manner. The sequence is that of Lipoprotein-releasing system ATP-binding protein LolD from Geobacter metallireducens (strain ATCC 53774 / DSM 7210 / GS-15).